Reading from the N-terminus, the 270-residue chain is Undecaprenyl-diphosphatase (270 aa).

Transmembrane regions (helical) follow at residues 1–21 (MDLF…FLPI), 39–59 (QGLV…MLYF), 87–107 (SHLV…GLAC), 114–134 (VARD…LLWW), 147–167 (ALSW…LIPG), 193–213 (FLMA…DLFA), 223–243 (FLGV…HGLL), and 250–270 (TMTP…ATLG).

Belongs to the UppP family.

Its subcellular location is the cell inner membrane. It catalyses the reaction di-trans,octa-cis-undecaprenyl diphosphate + H2O = di-trans,octa-cis-undecaprenyl phosphate + phosphate + H(+). In terms of biological role, catalyzes the dephosphorylation of undecaprenyl diphosphate (UPP). Confers resistance to bacitracin. The polypeptide is Undecaprenyl-diphosphatase (Magnetococcus marinus (strain ATCC BAA-1437 / JCM 17883 / MC-1)).